Consider the following 517-residue polypeptide: Maturase K (517 aa).

This sequence belongs to the intron maturase 2 family. MatK subfamily.

The protein resides in the plastid. It is found in the chloroplast. Functionally, usually encoded in the trnK tRNA gene intron. Probably assists in splicing its own and other chloroplast group II introns. This Veronica arvensis (Wall speedwell) protein is Maturase K.